The sequence spans 796 residues: MLVWLCGLCLVTLAGGRSAARLPLTEGRPTADFLPGDASLVEELLFGTGDTIELSCTTPGSSVSVVWFKDGISVDPPTWSHTGQKLLKIINVSYDDSGVYSCKARQSSEVLRNVTVRVTDSPSSGDDEDDDEESESANAPKFTRPEWMEKKLLAVPAANTVRFRCPAAGKPTPSITWLKNGKEFKGEHRIGGIKLRHQQWSLVMESVVPSDRGNYTCVVANKYGTIRETYTLDVLERTPHRPILQAGFRSNKTVVVGSDVEFHCKVYSDAQPHIQWLKHVEVNGSKFGPDGNPYVTVLKTAGVNTSDKELEIQFLRNVTFEDAGEYTCLAGNSIGYSHHSAWLTVLPPAEPVPDVDTSVSILAAAGCVAVVILVVIIIFTYKMKMPSKKTMNTATVHKVSKFPLKRQVSLESNSSMNSNTPLVRITRLSSSDGPMLANVSELELPADPKWELSRSRLTLGKPLGEGCFGQVVMADAVGIEKDKPNKATSVAVKMLKDDATDKDLSDLVSEMEMMKMIGKHKNIINLLGACTQDGPLYVLVEYASKGNLREYLRARRPPGMDYSFDTCKLPEEQLTFKDLVSCAYQVARGMEYLASQKCIHRDLAARNVLVTDDNVMKIADFGLARDVHNIDYYKKTTNGRLPVKWMAPEALFDRVYTHQSDVWSFGVLLWEIFTLGGSPYPGIPVEELFKLLKEGHRMDKPANCTHELYMIMRECWHAVPSQRPTFKQLVEDLDRVLTVTSTDEYLDLSVPFEQYSPACPDSHSSCSSGDDSVFAHDLPEEPCLPKHQQYNGVIRT.

A signal peptide spans 1-19 (MLVWLCGLCLVTLAGGRSA). Over 20–358 (ARLPLTEGRP…AEPVPDVDTS (339 aa)) the chain is Extracellular. In terms of domain architecture, Ig-like C2-type 1 spans 21 to 119 (RLPLTEGRPT…VLRNVTVRVT (99 aa)). A disulfide bridge links C56 with C102. N-linked (GlcNAc...) asparagine glycosylation is found at N91 and N113. A disordered region spans residues 117-142 (RVTDSPSSGDDEDDDEESESANAPKF). Residues 125-135 (GDDEDDDEESE) are compositionally biased toward acidic residues. Ig-like C2-type domains follow at residues 140–233 (PKFT…YTLD) and 239–344 (PHRP…AWLT). Cysteines 165 and 217 form a disulfide. N-linked (GlcNAc...) asparagine glycosylation is found at N214, N251, N283, N304, and N317. A disulfide bridge connects residues C264 and C328. The chain crosses the membrane as a helical span at residues 359–379 (VSILAAAGCVAVVILVVIIIF). The Cytoplasmic portion of the chain corresponds to 380–796 (TYKMKMPSKK…HQQYNGVIRT (417 aa)). Residues 457 to 746 (LTLGKPLGEG…LTVTSTDEYL (290 aa)) form the Protein kinase domain. Residues 463-471 (LGEGCFGQV) and K493 each bind ATP. D602 serves as the catalytic Proton acceptor. Phosphotyrosine; by autocatalysis is present on residues Y632, Y633, Y709, and Y745.

The protein belongs to the protein kinase superfamily. Tyr protein kinase family. Fibroblast growth factor receptor subfamily. Monomer. Homodimer after ligand binding. In terms of processing, autophosphorylated. Binding of FGF family members together with heparan sulfate proteoglycan or heparin promotes receptor dimerization and autophosphorylation on tyrosine residues. Autophosphorylation occurs in trans between the two FGFR molecules present in the dimer. In terms of tissue distribution, undetectable in the adult skeletal muscle. Low levels of expression were detected in the liver, lung and kidney. Medium levels of expression were detected in the heart, spleen, intestine and eye. Highest expression is observed in the testis.

It is found in the cell membrane. The enzyme catalyses L-tyrosyl-[protein] + ATP = O-phospho-L-tyrosyl-[protein] + ADP + H(+). Its activity is regulated as follows. Present in an inactive conformation in the absence of bound ligand. Ligand binding leads to dimerization and activation by autophosphorylation on tyrosine residues. Its function is as follows. Tyrosine-protein kinase that acts as a cell-surface receptor for fibroblast growth factors and plays an essential role in the regulation of cell proliferation, differentiation and apoptosis. Plays an essential role in the regulation of chondrocyte differentiation, proliferation and apoptosis, and is required for normal skeleton development. Regulates both osteogenesis and postnatal bone mineralization by osteoblasts. Promotes apoptosis in chondrocytes, but can also promote cancer cell proliferation. Phosphorylates PLCG1, CBL and FRS2. Ligand binding leads to the activation of several signaling cascades. Activation of PLCG1 leads to the production of the cellular signaling molecules diacylglycerol and inositol 1,4,5-trisphosphate. Phosphorylation of FRS2 triggers recruitment of GRB2, GAB1, PIK3R1 and SOS1, and mediates activation of RAS, MAPK1/ERK2, MAPK3/ERK1 and the MAP kinase signaling pathway, as well as of the AKT1 signaling pathway. The protein is Fibroblast growth factor receptor 3 (FGFR3) of Pleurodeles waltl (Iberian ribbed newt).